Reading from the N-terminus, the 29-residue chain is Conotoxin Bu17 (29 aa).

3 cysteine pairs are disulfide-bonded: Cys-4/Cys-19, Cys-5/Cys-25, and Cys-15/Cys-26. A Cysteine amide modification is found at Cys-26.

It belongs to the conotoxin M superfamily. Expressed by the venom duct.

Its subcellular location is the secreted. The chain is Conotoxin Bu17 from Conus bullatus (Bubble cone).